An 89-amino-acid chain; its full sequence is Small ribosomal subunit protein bS16 (89 aa).

The protein belongs to the bacterial ribosomal protein bS16 family.

The chain is Small ribosomal subunit protein bS16 from Geobacillus stearothermophilus (Bacillus stearothermophilus).